A 218-amino-acid chain; its full sequence is Cytochrome b6 (218 aa).

The chain crosses the membrane as a helical span at residues 35 to 55 (IFYCLGGITLVCFLIQFATGF). Heme c is bound at residue Cys-38. Positions 89 and 103 each coordinate heme b. Transmembrane regions (helical) follow at residues 93-113 (ASMM…TGGF), 119-139 (LTWV…VTGY), and 189-209 (LHTF…FLMI). Residues His-190 and His-205 each contribute to the heme b site.

Belongs to the cytochrome b family. PetB subfamily. In terms of assembly, the 4 large subunits of the cytochrome b6-f complex are cytochrome b6, subunit IV (17 kDa polypeptide, PetD), cytochrome f and the Rieske protein, while the 4 small subunits are PetG, PetL, PetM and PetN. The complex functions as a dimer. Requires heme b as cofactor. The cofactor is heme c.

The protein localises to the cellular thylakoid membrane. Its function is as follows. Component of the cytochrome b6-f complex, which mediates electron transfer between photosystem II (PSII) and photosystem I (PSI), cyclic electron flow around PSI, and state transitions. This Parasynechococcus marenigrum (strain WH8102) protein is Cytochrome b6.